The sequence spans 160 residues: Surface-adhesin protein E (160 aa).

The N-terminal stretch at 1-15 (MKKIILTLSLGLLTA) is a signal peptide. Cysteine 16 is lipidated: N-palmitoyl cysteine. Residue cysteine 16 is the site of S-diacylglycerol cysteine attachment.

The protein resides in the cell outer membrane. It localises to the cell surface. In terms of biological role, acts as a multifunctional adhesin involved in direct interactions with host epithelial cells and host proteins. The polypeptide is Surface-adhesin protein E (pe) (Haemophilus influenzae (strain ATCC 51907 / DSM 11121 / KW20 / Rd)).